Consider the following 144-residue polypeptide: Snaclec 6 (144 aa).

The N-terminal stretch at Met-1–Ala-23 is a signal peptide. 3 cysteine pairs are disulfide-bonded: Cys-25-Cys-36, Cys-53-Cys-142, and Cys-119-Cys-134. In terms of domain architecture, C-type lectin spans His-32–Lys-143.

The protein belongs to the snaclec family. In terms of assembly, heterodimer; disulfide-linked.

Its subcellular location is the secreted. Its function is as follows. Interferes with one step of hemostasis (modulation of platelet aggregation, or coagulation cascade, for example). The chain is Snaclec 6 from Daboia siamensis (Eastern Russel's viper).